Reading from the N-terminus, the 479-residue chain is MDYHSPYFFGYLLGLIHLLGIVAALHAVFTVRTAQGAIAWAMPLFFIPYLTLIPYLVFGARSFYAYIKARRQANHEMHVAMANLNWRPWVEEALTARESESYAALRAMPKLSRMPCLANNQVKLLINGQATFDAIFAAIEKARDVVLVQFFIIHDDTLGKALQQLLLRKAAEGVQVFVLYDRVGSHALPASYSQVLRDGGVQIHAFATRRGWFNRFQVNFRNHRKIVVVDGLVGFIGGHNVGDEYLGKHPQLSPWRDTHVQISGPVLACLQESFAEDWYWATRQLPPLILPDAYPDNGVLCQALASGPADPQETCSLFFLEAIHSATRRVWITSPYFIPDEAVFAALRLAVLRGVDVRVLIPSRPDHRIVYAASSLFAFEAVRAGVRVFRYQPGFLHQKVVLVDDDVSAIGSANLDNRSFRLNFEITLLTVDRSFADQVEHMLNDDFEQAREITAEDSRDTHRLQQLGMRIARLISPIL.

The next 2 helical transmembrane spans lie at 8-28 (FFGY…LHAV) and 38-58 (IAWA…YLVF). PLD phosphodiesterase domains follow at residues 218–245 (VNFR…GDEY) and 392–419 (QPGF…DNRS). Active-site residues include His223, Lys225, Asp230, His397, Lys399, and Asp404.

It belongs to the phospholipase D family. Cardiolipin synthase subfamily. ClsA sub-subfamily.

Its subcellular location is the cell inner membrane. It carries out the reaction 2 a 1,2-diacyl-sn-glycero-3-phospho-(1'-sn-glycerol) = a cardiolipin + glycerol. In terms of biological role, catalyzes the reversible phosphatidyl group transfer from one phosphatidylglycerol molecule to another to form cardiolipin (CL) (diphosphatidylglycerol) and glycerol. This is Cardiolipin synthase A from Pseudomonas putida (strain GB-1).